We begin with the raw amino-acid sequence, 305 residues long: Large ribosomal subunit protein uL3c (305 aa).

The transit peptide at 1–84 (MAAILPTFSI…AVGGLEIKMM (84 aa)) directs the protein to the chloroplast. Residues 228-256 (SHRALGSIGAGTTPGHVYKGKKMPGRMGG) are disordered.

In terms of assembly, component of the chloroplast large ribosomal subunit (LSU). Mature 70S chloroplast ribosomes of higher plants consist of a small (30S) and a large (50S) subunit. The 30S small subunit contains 1 molecule of ribosomal RNA (16S rRNA) and 24 different proteins. The 50S large subunit contains 3 rRNA molecules (23S, 5S and 4.5S rRNA) and 33 different proteins.

The protein localises to the plastid. It is found in the chloroplast. In terms of biological role, component of the chloroplast ribosome (chloro-ribosome), a dedicated translation machinery responsible for the synthesis of chloroplast genome-encoded proteins, including proteins of the transcription and translation machinery and components of the photosynthetic apparatus. The protein is Large ribosomal subunit protein uL3c (RPL3) of Spinacia oleracea (Spinach).